Reading from the N-terminus, the 688-residue chain is Phosphatidylinositol 4-phosphate 5-kinase type-1 gamma (688 aa).

Positions 48–71 are disordered; sequence GQPGPGHGKKLGHRGVDASGETTY. The region spanning 75-443 is the PIPK domain; that stretch reads TSSTLKGAIQ…RFFKFMSSTV (369 aa). Residues lysine 265 and lysine 268 each carry the N6-acetyllysine modification. The residue at position 459 (arginine 459) is an Asymmetric dimethylarginine; alternate. Arginine 459 bears the Omega-N-methylarginine; alternate mark. Residues 525–534 show a composition bias toward low complexity; that stretch reads TTLSSTSLSI. Disordered stretches follow at residues 525 to 565 and 592 to 629; these read TTLS…QEEL and GAGVEVPPSGASAAATVEVDAASQASEPASQASDEEDA. Serine 554 is modified (phosphoserine). The span at 602 to 623 shows a compositional bias: low complexity; the sequence is ASAAATVEVDAASQASEPASQA. Residue tyrosine 635 is modified to Phosphotyrosine; by EGFR. Tyrosine 671 is modified (phosphotyrosine; by CSK). Serine 672 carries the post-translational modification Phosphoserine; by CDK5, MAPK1 and CDK1. Phosphoserine occurs at positions 682 and 686. Threonine 688 bears the Phosphothreonine mark.

In terms of assembly, interacts with TLN1. Interacts with TLN2; interaction stimulates 1-phosphatidylinositol-4-phosphate 5-kinase activity. May compete with beta-integrins for the same binding site on TLN1 and TLN2. Interacts with ARF6; interaction stimulates 1-phosphatidylinositol-4-phosphate 5-kinase activity. Interacts with AP2B1. Interacts with AP2M1; phosphorylation of PIP5K1C by CSK disrupts the interaction; clathrin competes with PIP5K1C. Interacts with CDH1. Interacts with CSK. Interacts with PLCG1; interaction is abolished upon EGF stimulation. Interacts with LAPTM4B; promotes SNX5 association with LAPTM4B; kinase activity of PIP5K1C is required; interaction is regulated by phosphatidylinositol 4,5-bisphosphate generated by PIP5K1C. Phosphorylation on Ser-672 negatively regulates binding to TLN2 and is strongly stimulated in mitosis. Phosphorylation on Tyr-671 is necessary for targeting to focal adhesions. Phosphorylation on Ser-672 and Tyr-671 are mutually exclusive. Phosphorylated by SYK and CSK. Tyrosine phosphorylation is enhanced by PTK2 signaling. Phosphorylated at Tyr-635 upon EGF stimulation. Some studies suggest that phosphorylation on Tyr-671 enhances binding to tailins (TLN1 and TLN2); others that phosphorylation at Tyr-671 does not directly enhance binding to tailins (TLN1 and TLN2) but may act indirectly by inhibiting phosphorylation at Ser-672. Post-translationally, acetylation at Lys-265 and Lys-268 seems to decrease lipid kinase activity. Deacetylation of these sites by SIRT1 positively regulates the exocytosis of TSH-containing granules from pituitary cells.

Its subcellular location is the cell membrane. The protein localises to the endomembrane system. It is found in the cytoplasm. The protein resides in the cell junction. It localises to the focal adhesion. Its subcellular location is the adherens junction. The protein localises to the cell projection. It is found in the ruffle membrane. The protein resides in the phagocytic cup. It localises to the uropodium. The enzyme catalyses a 1,2-diacyl-sn-glycero-3-phospho-(1D-myo-inositol 4-phosphate) + ATP = a 1,2-diacyl-sn-glycero-3-phospho-(1D-myo-inositol-4,5-bisphosphate) + ADP + H(+). It catalyses the reaction 1-octadecanoyl-2-(5Z,8Z,11Z,14Z)-eicosatetraenoyl-sn-glycero-3-phospho-1D-myo-inositol 4-phosphate + ATP = 1-octadecanoyl-2-(5Z,8Z,11Z,14Z)-eicosatetraenoyl-sn-glycero-3-phospho-1D-myo-inositol 4,5-bisphosphate + ADP + H(+). The catalysed reaction is 1-octadecanoyl-2-(9Z)-octadecenoyl-sn-glycero-3-phospho-1D-myo-inositol 4-phosphate + ATP = 1-octadecanoyl-2-(9Z)-octadecenoyl-sn-glycero-3-phospho-1D-myo-inositol 4,5-bisphosphate + ADP + H(+). It carries out the reaction 1-octadecanoyl-2-(9Z)-octadecenoyl-sn-glycero-3-phospho-1D-myo-inositol + ATP = 1-octadecanoyl-2-(9Z)-octadecenoyl-sn-glycero-3-phospho-1D-myo-inositol 5-phosphate + ADP + H(+). The enzyme catalyses 1-octadecanoyl-2-(9Z,12Z)-octadecadienoyl-sn-glycero-3-phospho-1D-myo-inositol + ATP = 1-octadecanoyl-2-(9Z,12Z)-octadecadienoyl-sn-glycero-3-phospho-1D-myo-inositol 5-phosphate + ADP + H(+). It catalyses the reaction 1-octadecanoyl-2-(5Z,8Z,11Z,14Z-eicosatetraenoyl)-sn-glycero-3-phospho-(1D-myo-inositol) + ATP = 1-octadecanoyl-2-(5Z,8Z,11Z,14Z)-eicosatetraenoyl-sn-glycero-3-phospho-1D-myo-inositol 5-phosphate + ADP + H(+). The catalysed reaction is 1,2-di-(9Z,12Z)-octadecadienoyl-sn-glycero-3-phospho-1D-myo-inositol + ATP = 1,2-di(9Z,12Z)-octadecadienoyl-sn-glycero-3-phospho-1D-myo-inositol 5-phosphate + ADP + H(+). Catalyzes the phosphorylation of phosphatidylinositol 4-phosphate (PtdIns(4)P/PI4P) to form phosphatidylinositol 4,5-bisphosphate (PtdIns(4,5)P2/PIP2), a lipid second messenger that regulates several cellular processes such as signal transduction, vesicle trafficking, actin cytoskeleton dynamics, cell adhesion, and cell motility. PtdIns(4,5)P2 can directly act as a second messenger or can be utilized as a precursor to generate other second messengers: inositol 1,4,5-trisphosphate (IP3), diacylglycerol (DAG) or phosphatidylinositol-3,4,5-trisphosphate (PtdIns(3,4,5)P3/PIP3). PIP5K1A-mediated phosphorylation of PtdIns(4)P is the predominant pathway for PtdIns(4,5)P2 synthesis. Together with PIP5K1A, is required for phagocytosis, both enzymes regulating different types of actin remodeling at sequential steps. Promotes particle attachment by generating the pool of PtdIns(4,5)P2 that induces controlled actin depolymerization to facilitate Fc-gamma-R clustering. Mediates RAC1-dependent reorganization of actin filaments. Required for synaptic vesicle transport. Controls the plasma membrane pool of PtdIns(4,5)P2 implicated in synaptic vesicle endocytosis and exocytosis. Plays a role in endocytosis mediated by clathrin and AP-2 (adaptor protein complex 2). Required for clathrin-coated pits assembly at the synapse. Participates in cell junction assembly. Modulates adherens junctions formation by facilitating CDH1/cadherin trafficking. Required for focal adhesion dynamics. Modulates the targeting of talins (TLN1 and TLN2) to the plasma membrane and their efficient assembly into focal adhesions. Regulates the interaction between talins (TLN1 and TLN2) and beta-integrins. Required for uropodium formation and retraction of the cell rear during directed migration. Has a role in growth factor-stimulated directional cell migration and adhesion. Required for talin assembly into nascent adhesions forming at the leading edge toward the direction of the growth factor. Negative regulator of T-cell activation and adhesion. Negatively regulates integrin alpha-L/beta-2 (LFA-1) polarization and adhesion induced by T-cell receptor. Together with PIP5K1A has a role during embryogenesis and together with PIP5K1B may have a role immediately after birth. In Rattus norvegicus (Rat), this protein is Phosphatidylinositol 4-phosphate 5-kinase type-1 gamma.